We begin with the raw amino-acid sequence, 377 residues long: RING-H2 finger protein ATL22 (377 aa).

Residues 1–23 (MTSKLLPLLLNLIFLFFFPLLNA) form the signal peptide. A helical membrane pass occupies residues 244 to 264 (IMCLSLVGPLTALTFCVGLVM). An RING-type; atypical zinc finger spans residues 327–369 (CPICLSEYATKETVRCLPECEHCFHTECIDAWLKLHSSCPVCR).

Belongs to the RING-type zinc finger family. ATL subfamily.

Its subcellular location is the membrane. The catalysed reaction is S-ubiquitinyl-[E2 ubiquitin-conjugating enzyme]-L-cysteine + [acceptor protein]-L-lysine = [E2 ubiquitin-conjugating enzyme]-L-cysteine + N(6)-ubiquitinyl-[acceptor protein]-L-lysine.. The protein operates within protein modification; protein ubiquitination. This Arabidopsis thaliana (Mouse-ear cress) protein is RING-H2 finger protein ATL22 (ATL22).